The sequence spans 313 residues: MLDNVLRIATRQSPLALWQAQYVKQRLEACHQGLRVELVPMVTRGDVILDTPLAKVGGKGLFVKELEIALLENRADIAVHSMKDVPVEFPEGLGLVTICEREDPRDAFVSNRYASLDDLPKGSVVGTSSLRRQCQLAERRPDLVIRSLRGNVGTRLGKLDNGDYDAIILAVAGLKRLGLESRIRVAMPPELCLPAVGQGAVGIECRLDDDRTRALLSPLNHDETAIRVQAERAMNMRLEGGCQVPIGSYAELINGELWLRALVGAPDGSQMVRGERRGLPQDAEMLGISLADELLNNGARAILADVYNGEPPA.

Residue C242 is modified to S-(dipyrrolylmethanemethyl)cysteine.

This sequence belongs to the HMBS family. In terms of assembly, monomer. It depends on dipyrromethane as a cofactor.

It carries out the reaction 4 porphobilinogen + H2O = hydroxymethylbilane + 4 NH4(+). The protein operates within porphyrin-containing compound metabolism; protoporphyrin-IX biosynthesis; coproporphyrinogen-III from 5-aminolevulinate: step 2/4. Tetrapolymerization of the monopyrrole PBG into the hydroxymethylbilane pre-uroporphyrinogen in several discrete steps. The chain is Porphobilinogen deaminase from Enterobacter sp. (strain 638).